The chain runs to 806 residues: Phenylalanine--tRNA ligase beta subunit (806 aa).

Residues 44 to 158 form the tRNA-binding domain; sequence ADGLSKLVVG…EEAVPGDAIF (115 aa). The B5 domain occupies 411–486; the sequence is TEPVEVSTSL…RIYGYDKLPT (76 aa). The Mg(2+) site is built by Asp-464, Asp-470, Glu-473, and Glu-474. In terms of domain architecture, FDX-ACB spans 713–806; the sequence is TKFPAMTRDV…LTEQVGAEVR (94 aa).

Belongs to the phenylalanyl-tRNA synthetase beta subunit family. Type 1 subfamily. In terms of assembly, tetramer of two alpha and two beta subunits. The cofactor is Mg(2+).

The protein localises to the cytoplasm. The enzyme catalyses tRNA(Phe) + L-phenylalanine + ATP = L-phenylalanyl-tRNA(Phe) + AMP + diphosphate + H(+). In Streptococcus pyogenes serotype M28 (strain MGAS6180), this protein is Phenylalanine--tRNA ligase beta subunit.